Reading from the N-terminus, the 716-residue chain is MEDSTSPKQEKENQEELGETRRPWEGKTAASPQYSEPESSEPLEAKQGPETGRQSRSSRPWSPQSRAKTPLGGPAGPETSSPAPVSPREPSSSPSPLAPARQDLAAPPQSDRTTSVIPEAGTPYPDPLEQSSDKRESTPHHTSQSEGNTFQQSQQPKPHLCGRRDVSYNNAKQKELRFDVFQEEDSNSDYDLQQPAPGGSEVAPSMLEITIQNAKAYLLKTSSNSGFNLYDHLSNMLTKILNERPENAVDIFENISQDVKMAHFSKKFDALQNENELLPTYEIAEKQKALFLQGHLEGVDQELEDEIAENALPNVMESAFYFEQAGVGLGTDETYRIFLALKQLTDTHPIQRCRFWGKILGLEMNYIVAEVEFREGEDEEEVEEEDVAEERDNGESEAHEDEEDELPKSFYKAPQAIPKEESRTGANKYVYFVCNEPGRPWVKLPPVIPAQIVIARKIKKFFTGRLDAPIISYPPFPGNESNYLRAQIARISAGTHVSPLGFYQFGEEEGEEEEEAEGGRNSFEENPDFEGIQVIDLVESLSNWVHHVQHILSQGRCNWFNSIQKNEEEEEEEDEEKDDSDYIEQEVGLPLLTPISEDLEIQNIPPWTTRLSSNLIPQYAIAVLQSNLWPGAYAFSNGKKFENFYIGWGHKYSPDNYTPPVPPPVYQEYPSGPEITEMDDPSVEEEQAFRAAQEAVLLAAENEESEEDEDEEDDYD.

Disordered stretches follow at residues 1 to 164, 375 to 410, 506 to 526, and 697 to 716; these read MEDS…CGRR, EGED…PKSF, GEEE…FEEN, and LLAA…DDYD. Over residues 8–25 the composition is skewed to basic and acidic residues; sequence KQEKENQEELGETRRPWE. Composition is skewed to low complexity over residues 29 to 42, 54 to 66, and 80 to 100; these read AASP…SSEP, QSRS…PQSR, and SSPA…LAPA. Polar residues predominate over residues 140 to 156; the sequence is HHTSQSEGNTFQQSQQP. Positions 375 to 389 are enriched in acidic residues; that stretch reads EGEDEEEVEEEDVAE. Serine 396 carries the post-translational modification Phosphoserine. Composition is skewed to acidic residues over residues 506–516 and 701–716; these read GEEEGEEEEEA and ENEE…DDYD.

The protein belongs to the flagellar radial spoke RSP4/6 family. As to quaternary structure, interacts with RSPH6A. Expressed in trachea, lungs, and testes. Very strong expression is detected in nasal brushings.

The protein resides in the cytoplasm. It is found in the cytoskeleton. The protein localises to the cilium axoneme. It localises to the cell projection. Its subcellular location is the cilium. Functionally, component of the axonemal radial spoke head which plays an important role in ciliary motility. Essential for triplet radial spokes (RS1, RS2 and RS3) head assembly in the motile cilia. In Homo sapiens (Human), this protein is Radial spoke head protein 4 homolog A (RSPH4A).